The following is a 251-amino-acid chain: uncharacterized protein (251 aa).

The HTH deoR-type domain occupies 3-58 (TPERHQLIIDQIEKHDVVKIQELINLTNASESTIRRDLSTLEERGFLKRVHGGAAK). Residues 20–39 (VKIQELINLTNASESTIRRD) constitute a DNA-binding region (H-T-H motif).

This is an uncharacterized protein from Bacillus subtilis (strain 168).